A 578-amino-acid polypeptide reads, in one-letter code: Longifolene synthase (578 aa).

Positions 331, 335, and 475 each coordinate Mg(2+). The DDXXD motif motif lies at 331-335 (DDLYD).

This sequence belongs to the terpene synthase family. Tpsd subfamily. Mg(2+) is required as a cofactor. Mn(2+) serves as cofactor.

The enzyme catalyses (2E,6E)-farnesyl diphosphate = longifolene + diphosphate. Its pathway is sesquiterpene biosynthesis. It participates in terpene metabolism; oleoresin biosynthesis. Terpene synthase (TPS) involved in the biosynthesis of sesquiterpene natural products included in conifer oleoresin secretions and volatile emissions; these compounds contribute to biotic and abiotic stress defense against herbivores and pathogens. Catalyzes the conversion of (2E,6E)-farnesyl diphosphate (FPP) to longifolene. In Picea engelmannii x Picea glauca (Hybrid white spruce), this protein is Longifolene synthase.